A 466-amino-acid chain; its full sequence is Cysteine--tRNA ligase (466 aa).

Cysteine 28 is a binding site for Zn(2+). The 'HIGH' region motif lies at 30 to 40 (PTVYNFFHIGN). Residues cysteine 208, histidine 233, and glutamate 237 each contribute to the Zn(2+) site. The 'KMSKS' region motif lies at 265-269 (KMSKS). ATP is bound at residue lysine 268.

It belongs to the class-I aminoacyl-tRNA synthetase family. Monomer. It depends on Zn(2+) as a cofactor.

The protein resides in the cytoplasm. It catalyses the reaction tRNA(Cys) + L-cysteine + ATP = L-cysteinyl-tRNA(Cys) + AMP + diphosphate. This is Cysteine--tRNA ligase from Clostridium perfringens (strain ATCC 13124 / DSM 756 / JCM 1290 / NCIMB 6125 / NCTC 8237 / Type A).